The following is a 142-amino-acid chain: Hemoglobin subunit alpha-B (142 aa).

The region spanning 2–142 (PFSASDRHDI…VSETLYSKYR (141 aa)) is the Globin domain. Residue Q59 coordinates O2. H88 provides a ligand contact to heme b.

The protein belongs to the globin family. As to quaternary structure, heterotetramer of either two alpha-B chains or two alpha-C chains and two beta chains. The two major hemoglobins, B and C, associate upon deoxygenation to form a trimer of tetramers, BC2, that has a much lower affinity for oxygen than either component alone. Red blood cells.

The alpha-B chain is a component of adult hemoglobin B. This is Hemoglobin subunit alpha-B from Aquarana catesbeiana (American bullfrog).